Reading from the N-terminus, the 324-residue chain is Cytosolic sulfotransferase 13 (324 aa).

Residue 76 to 81 (KSGTTW) participates in 3'-phosphoadenylyl sulfate binding. Catalysis depends on His134, which acts as the Proton acceptor. 3'-phosphoadenylyl sulfate-binding positions include Arg156, Ser164, Tyr222, and 288–290 (RKG).

Belongs to the sulfotransferase 1 family.

The protein localises to the cytoplasm. Functionally, sulfotransferase that utilizes 3'-phospho-5'-adenylyl sulfate (PAPS) as sulfonate donor. The protein is Cytosolic sulfotransferase 13 (SOT13) of Arabidopsis thaliana (Mouse-ear cress).